A 225-amino-acid polypeptide reads, in one-letter code: PKHD-type hydroxylase KPK_3192 (225 aa).

The 100-residue stretch at 78–177 (TISAPLFNRY…RQASFLWIQS (100 aa)) folds into the Fe2OG dioxygenase domain. The Fe cation site is built by His96, Asp98, and His158. Arg168 is a binding site for 2-oxoglutarate.

Fe(2+) serves as cofactor. It depends on L-ascorbate as a cofactor.

The polypeptide is PKHD-type hydroxylase KPK_3192 (Klebsiella pneumoniae (strain 342)).